The chain runs to 571 residues: Putative diflavin flavoprotein A 1 (571 aa).

The zinc metallo-hydrolase stretch occupies residues 43–236 (ENGTTYNSFL…PPVQLVATGH (194 aa)). Fe cation is bound by residues His92, Glu94, Asp96, His159, Asp178, and His236. The Flavodoxin-like domain maps to 265-426 (VAIFYAANYG…DLDKALGRLS (162 aa)). Positions 427–571 (GGLYIITAQK…VHHRKVGNHY (145 aa)) are flavodoxin-reductase-like.

It in the N-terminal section; belongs to the zinc metallo-hydrolase group 3 family. This sequence in the C-terminal section; belongs to the flavodoxin reductase family. It depends on Fe cation as a cofactor.

In terms of biological role, mediates electron transfer from NADH to oxygen, reducing it to water. This modular protein has 3 redox cofactors, in other organisms the same activity requires 2 or 3 proteins. The protein is Putative diflavin flavoprotein A 1 (dfa1) of Thermosynechococcus vestitus (strain NIES-2133 / IAM M-273 / BP-1).